The primary structure comprises 216 residues: Probable transaldolase (216 aa).

Catalysis depends on K83, which acts as the Schiff-base intermediate with substrate.

Belongs to the transaldolase family. Type 3B subfamily.

The protein resides in the cytoplasm. It catalyses the reaction D-sedoheptulose 7-phosphate + D-glyceraldehyde 3-phosphate = D-erythrose 4-phosphate + beta-D-fructose 6-phosphate. It functions in the pathway carbohydrate degradation; pentose phosphate pathway; D-glyceraldehyde 3-phosphate and beta-D-fructose 6-phosphate from D-ribose 5-phosphate and D-xylulose 5-phosphate (non-oxidative stage): step 2/3. In terms of biological role, transaldolase is important for the balance of metabolites in the pentose-phosphate pathway. The polypeptide is Probable transaldolase (Desulforamulus reducens (strain ATCC BAA-1160 / DSM 100696 / MI-1) (Desulfotomaculum reducens)).